Here is a 354-residue protein sequence, read N- to C-terminus: MTLLKNDTFLRALLKQPVEYTPIWMMRQAGRYLPEYKATRAKAGSFLDLCKNTELATEVTIQPLERFDLDAAILFSDILTVPDAMGLGLYFAEGEGPKFKRALQHEDDIAKLHVPDMEKLQYVFDAVTSIRKALDGRVPLIGFSGSPFTLACYMVEGGSSKEFRTIKTMMYSRPDLLHKILDTNAQAVTAYLNAQIDAGAQAVQIFDTWGGVLSDAAFKEFSLKYIRQIVAGLKRESEGRRVPVIVFAKGGGLWLESMAQIGADALGLDWTCNIGEARRRVGKQVALQGNFDPFALFGTPESIRTEVARILADYGHGSGHVFNLGHGINQHADPEHAKILVDTVHELSRQYHGG.

Residues 27–31 (RQAGR), Phe-46, Asp-77, Tyr-153, Thr-208, and His-326 each bind substrate.

This sequence belongs to the uroporphyrinogen decarboxylase family. As to quaternary structure, homodimer.

Its subcellular location is the cytoplasm. The catalysed reaction is uroporphyrinogen III + 4 H(+) = coproporphyrinogen III + 4 CO2. The protein operates within porphyrin-containing compound metabolism; protoporphyrin-IX biosynthesis; coproporphyrinogen-III from 5-aminolevulinate: step 4/4. In terms of biological role, catalyzes the decarboxylation of four acetate groups of uroporphyrinogen-III to yield coproporphyrinogen-III. The sequence is that of Uroporphyrinogen decarboxylase from Neisseria meningitidis serogroup A / serotype 4A (strain DSM 15465 / Z2491).